Here is a 429-residue protein sequence, read N- to C-terminus: MRVNIVGAGLAGVEVAYKLLREGFKVRIFEQKPVKFSPVHKMETFGELVCSNSLKSESLKNAEGILKEEMKLLDSLVLNCAYKTRVPAGKALAVDREKFSQCITKVLESFENIEIVRKEVEKIDLDTNEIWVVATGPTTDGKFAQWLSKLTGGFLNFFDAVAPIISRDSIDFNKCFVGDRYGVGTGDYINCPMTKEEYERFYRELVNAEMIEMKDFDRKLLFERCQPIEEIAKSGEKSLLFGPLRPVGLVNPHTGEIPYAVIQLRKEDEEGNMYNIVGFQTRLKWSEQKRIIRLIPGLENAEILRYGVMHRNTYIDTPRVLDEFLRHKKYKNIFFAGQITGVEGYLESAACGIYVGLNISRILSGKEPVKLPPKTMMGALINYITKADELKPMYANFGLINVKMKKNEKREKLHEICINEMKNFLNMLK.

7 to 12 (GAGLAG) is a binding site for FAD.

Belongs to the MnmG family. TrmFO subfamily. It depends on FAD as a cofactor.

The protein localises to the cytoplasm. The catalysed reaction is uridine(54) in tRNA + (6R)-5,10-methylene-5,6,7,8-tetrahydrofolate + NADH + H(+) = 5-methyluridine(54) in tRNA + (6S)-5,6,7,8-tetrahydrofolate + NAD(+). It catalyses the reaction uridine(54) in tRNA + (6R)-5,10-methylene-5,6,7,8-tetrahydrofolate + NADPH + H(+) = 5-methyluridine(54) in tRNA + (6S)-5,6,7,8-tetrahydrofolate + NADP(+). Functionally, catalyzes the folate-dependent formation of 5-methyl-uridine at position 54 (M-5-U54) in all tRNAs. This chain is Methylenetetrahydrofolate--tRNA-(uracil-5-)-methyltransferase TrmFO, found in Thermosipho africanus (strain TCF52B).